The primary structure comprises 325 residues: MSETATWQPSASVPNLLKRAAIMTEIRRFFADRGVLEVETPCMSQATVTDIHLFPFETRFVGPGHSQGMNLYLMTSPEYHMKRLLAAGCGPVFQLCRSFRNEEMGRYHNPEFTMLEWYRPHYDMYRLMNEVDDLLQQVLDCQPAESLSYQQAFQRHLEIDPLSADKTQLREAAAKLDVSNIADTEEDRDTLLQLLFTVGVEPHIGKEKPTFIYHFPASQASLAQISTEDHRVAERFEVYYKGIELANGFHELTDAREQQQRFEQDNRKRAARGLPQQPIDNHLLDALKAGMPDCSGVALGVDRLVMLALGAERLADVIAFTVDRA.

Residue 76–78 (SPE) participates in substrate binding. ATP contacts are provided by residues 100 to 102 (RNE) and Asn109. Tyr118 provides a ligand contact to substrate. 244–245 (EL) is an ATP binding site. Glu251 contacts substrate. Gly300 serves as a coordination point for ATP.

It belongs to the class-II aminoacyl-tRNA synthetase family. EpmA subfamily. As to quaternary structure, homodimer.

It carries out the reaction D-beta-lysine + L-lysyl-[protein] + ATP = N(6)-((3R)-3,6-diaminohexanoyl)-L-lysyl-[protein] + AMP + diphosphate + H(+). With EpmB is involved in the beta-lysylation step of the post-translational modification of translation elongation factor P (EF-P) on 'Lys-34'. Catalyzes the ATP-dependent activation of (R)-beta-lysine produced by EpmB, forming a lysyl-adenylate, from which the beta-lysyl moiety is then transferred to the epsilon-amino group of EF-P 'Lys-34'. This Salmonella arizonae (strain ATCC BAA-731 / CDC346-86 / RSK2980) protein is Elongation factor P--(R)-beta-lysine ligase.